An 861-amino-acid polypeptide reads, in one-letter code: Leucine--tRNA ligase (861 aa).

The 'HIGH' region signature appears at 42-52; sequence PYPSGKLHMGH. Positions 620-624 match the 'KMSKS' region motif; it reads KMSKS. Lys623 contacts ATP.

It belongs to the class-I aminoacyl-tRNA synthetase family.

It localises to the cytoplasm. The catalysed reaction is tRNA(Leu) + L-leucine + ATP = L-leucyl-tRNA(Leu) + AMP + diphosphate. The polypeptide is Leucine--tRNA ligase (Hahella chejuensis (strain KCTC 2396)).